Here is a 262-residue protein sequence, read N- to C-terminus: Ribosomal RNA small subunit methyltransferase A (262 aa).

6 residues coordinate S-adenosyl-L-methionine: N14, L16, G41, E62, D87, and N109.

Belongs to the class I-like SAM-binding methyltransferase superfamily. rRNA adenine N(6)-methyltransferase family. RsmA subfamily.

Its subcellular location is the cytoplasm. The enzyme catalyses adenosine(1518)/adenosine(1519) in 16S rRNA + 4 S-adenosyl-L-methionine = N(6)-dimethyladenosine(1518)/N(6)-dimethyladenosine(1519) in 16S rRNA + 4 S-adenosyl-L-homocysteine + 4 H(+). Specifically dimethylates two adjacent adenosines (A1518 and A1519) in the loop of a conserved hairpin near the 3'-end of 16S rRNA in the 30S particle. May play a critical role in biogenesis of 30S subunits. This chain is Ribosomal RNA small subunit methyltransferase A, found in Francisella tularensis subsp. novicida (strain U112).